Reading from the N-terminus, the 179-residue chain is Peptidyl-tRNA hydrolase (179 aa).

Tyrosine 14 lines the tRNA pocket. Catalysis depends on histidine 19, which acts as the Proton acceptor. TRNA contacts are provided by tyrosine 61, asparagine 63, and asparagine 107.

It belongs to the PTH family. As to quaternary structure, monomer.

It is found in the cytoplasm. It carries out the reaction an N-acyl-L-alpha-aminoacyl-tRNA + H2O = an N-acyl-L-amino acid + a tRNA + H(+). Functionally, hydrolyzes ribosome-free peptidyl-tRNAs (with 1 or more amino acids incorporated), which drop off the ribosome during protein synthesis, or as a result of ribosome stalling. Its function is as follows. Catalyzes the release of premature peptidyl moieties from peptidyl-tRNA molecules trapped in stalled 50S ribosomal subunits, and thus maintains levels of free tRNAs and 50S ribosomes. The sequence is that of Peptidyl-tRNA hydrolase from Campylobacter lari (strain RM2100 / D67 / ATCC BAA-1060).